The primary structure comprises 556 residues: Urease subunit alpha 1 (556 aa).

The Urease domain occupies G127–L556. Ni(2+) contacts are provided by H132, H134, and K212. N6-carboxylysine is present on K212. Position 214 (H214) interacts with substrate. The Ni(2+) site is built by H241 and H267. H315 acts as the Proton donor in catalysis. D355 is a Ni(2+) binding site.

This sequence belongs to the metallo-dependent hydrolases superfamily. Urease alpha subunit family. In terms of assembly, may form a heterohexamer of 3 UreC (alpha) and 3 UreAB (gamma/beta) subunits. May also form a heterotrimer of UreA (gamma), UreB (beta) and UreC (alpha) subunits. Three heterotrimers associate to form the active enzyme. The cofactor is Ni cation. Post-translationally, carboxylation allows a single lysine to coordinate two nickel ions.

It is found in the cytoplasm. The catalysed reaction is urea + 2 H2O + H(+) = hydrogencarbonate + 2 NH4(+). Its pathway is nitrogen metabolism; urea degradation; CO(2) and NH(3) from urea (urease route): step 1/1. The polypeptide is Urease subunit alpha 1 (Streptomyces avermitilis (strain ATCC 31267 / DSM 46492 / JCM 5070 / NBRC 14893 / NCIMB 12804 / NRRL 8165 / MA-4680)).